The chain runs to 705 residues: Ribosomal RNA large subunit methyltransferase K/L (705 aa).

The THUMP domain occupies 42 to 154 (LAQKVCLSTR…RYGVSMYIDY (113 aa)).

The protein belongs to the methyltransferase superfamily. RlmKL family.

Its subcellular location is the cytoplasm. It carries out the reaction guanosine(2445) in 23S rRNA + S-adenosyl-L-methionine = N(2)-methylguanosine(2445) in 23S rRNA + S-adenosyl-L-homocysteine + H(+). The catalysed reaction is guanosine(2069) in 23S rRNA + S-adenosyl-L-methionine = N(2)-methylguanosine(2069) in 23S rRNA + S-adenosyl-L-homocysteine + H(+). In terms of biological role, specifically methylates the guanine in position 2445 (m2G2445) and the guanine in position 2069 (m7G2069) of 23S rRNA. The chain is Ribosomal RNA large subunit methyltransferase K/L from Pseudoalteromonas translucida (strain TAC 125).